The primary structure comprises 1210 residues: Disease resistance-like protein DSC2 (1210 aa).

The region spanning 59 to 223 is the TIR domain; that stretch reads WTHQVFPSFR…KVAKDVSDVL (165 aa). Glutamate 134 is a catalytic residue. One can recognise an NB-ARC domain in the interval 241-511; sequence ITRINSLLCL…CLFNGCQVNH (271 aa). LRR repeat units follow at residues 662–685, 686–709, 711–732, 756–780, 783–804, 805–828, 830–848, 849–873, and 940–970; these read AKFL…IQPL, KNLK…SNAT, LESL…IRGT, ATSL…LPGD, MRSL…PEIS, TNIQ…RLWS, LDKL…PPVP, DGIS…NLSQ, and LPEL…NLSQ.

Belongs to the disease resistance NB-LRR family. As to quaternary structure, interacts with DSC1.

The catalysed reaction is NAD(+) + H2O = ADP-D-ribose + nicotinamide + H(+). Its function is as follows. TIR-NB-LRR receptor-like protein involved in plant defense. Acts as a trigger of hypersensitive response (HR). Functions as a guard of CAMTA3, a negative regulator of immunity, during pathogen infection. The polypeptide is Disease resistance-like protein DSC2 (Arabidopsis thaliana (Mouse-ear cress)).